A 282-amino-acid chain; its full sequence is Large ribosomal subunit protein uL2 (282 aa).

A disordered region spans residues 223–282 (TVRGSVMNPNDHPHGGGEGRAPIGRKSPVTPWGKKALGVKTRNTKKTSEKLIVRKRSNKK).

It belongs to the universal ribosomal protein uL2 family. Part of the 50S ribosomal subunit. Forms a bridge to the 30S subunit in the 70S ribosome.

In terms of biological role, one of the primary rRNA binding proteins. Required for association of the 30S and 50S subunits to form the 70S ribosome, for tRNA binding and peptide bond formation. It has been suggested to have peptidyltransferase activity; this is somewhat controversial. Makes several contacts with the 16S rRNA in the 70S ribosome. The polypeptide is Large ribosomal subunit protein uL2 (Mycoplasma mycoides subsp. mycoides SC (strain CCUG 32753 / NCTC 10114 / PG1)).